The primary structure comprises 1026 residues: HEAT repeat-containing protein 4 (1026 aa).

Residues 135–175 (AVKTESSANPEKKLKKSKPASTVREAPRPLIHHPCMHPDML) form a disordered region. HEAT repeat units follow at residues 530–568 (LLPALEAALCDKNAHVRMAAAICQYAIQSHNPLARNIMQ), 724–760 (KLMTAKLLPSFLHCFSDDFTAVRRAACLAAGALQIRD), and 761–794 (KMVLECLLNLMQRDPYWKIKAFAIRALGQIGQVS).

In Homo sapiens (Human), this protein is HEAT repeat-containing protein 4 (HEATR4).